Reading from the N-terminus, the 150-residue chain is MKVIATNKKAFHDFEILERYEAGLVLQGSEVKAIRAGRVNLKDSFVKFVKGEPFVFGMHISYLDSANPHFRPDEKRPRKLLLHKKEIDKLIGKTSEKGYTIVPLKLYFNKKNIAKLEIGLAKGKTLHDKRESLKKKIMDREARAAMKEYR.

Belongs to the SmpB family.

Its subcellular location is the cytoplasm. Functionally, required for rescue of stalled ribosomes mediated by trans-translation. Binds to transfer-messenger RNA (tmRNA), required for stable association of tmRNA with ribosomes. tmRNA and SmpB together mimic tRNA shape, replacing the anticodon stem-loop with SmpB. tmRNA is encoded by the ssrA gene; the 2 termini fold to resemble tRNA(Ala) and it encodes a 'tag peptide', a short internal open reading frame. During trans-translation Ala-aminoacylated tmRNA acts like a tRNA, entering the A-site of stalled ribosomes, displacing the stalled mRNA. The ribosome then switches to translate the ORF on the tmRNA; the nascent peptide is terminated with the 'tag peptide' encoded by the tmRNA and targeted for degradation. The ribosome is freed to recommence translation, which seems to be the essential function of trans-translation. The polypeptide is SsrA-binding protein (Nitratiruptor sp. (strain SB155-2)).